The chain runs to 516 residues: Histidine ammonia-lyase (516 aa).

A cross-link (5-imidazolinone (Ala-Gly)) is located at residues 143–145; sequence ASG. 2,3-didehydroalanine (Ser) is present on serine 144.

The protein belongs to the PAL/histidase family. Contains an active site 4-methylidene-imidazol-5-one (MIO), which is formed autocatalytically by cyclization and dehydration of residues Ala-Ser-Gly.

The protein localises to the cytoplasm. The enzyme catalyses L-histidine = trans-urocanate + NH4(+). It participates in amino-acid degradation; L-histidine degradation into L-glutamate; N-formimidoyl-L-glutamate from L-histidine: step 1/3. The polypeptide is Histidine ammonia-lyase (Koribacter versatilis (strain Ellin345)).